Here is a 455-residue protein sequence, read N- to C-terminus: O-acyltransferase pigD (455 aa).

Belongs to the trichothecene 3-O-acetyltransferase family.

Its pathway is secondary metabolite biosynthesis. Functionally, O-acetyltransferase; part of the gene cluster that mediates the biosynthesis of azaphilone pigments (MonAzPs), a complex mixture of compounds with a common azaphilone skeleton very widely used as food colorants. Within the pathway, pigD directly transfers the fatty acyl chain from the beta-ketoacyl-ACP produced by the pigJ-pigK fatty acid synthase (FAS) to the C-4 alcohol. The first step of the pathway is performed by the nrPKS pigA that forms the hexaketide precursor from successive condensations of five malonyl-CoA units, with a simple acetyl-CoA starter unit. The role of esterase pigG is not clear, but it may play at most a supplementary role in the formation of the benzaldehyde produced by the pigA nrPKS. This very reactive benzaldehyde is intercepted by the pigC ketoreductase that to provide the first stable enzyme-free MonAzPs intermediate, 6-(4-hydroxy-2-oxopentyl)-3-methyl-2,4-dioxocyclohexane carbaldehyde, also known as M7PKS-1. The FAD-dependent monooxygenase pigN hydroxylates M7PKS-1 at C-4, which triggers the formation of the pyran ring. PigJ, pigK and pigD are involved in the acetylation of the pyran ring. PigJ and pigK form the two subunits of a dedicated fungal FAS that produces the side chain fatty acyl moiety of MonAzPs and pigD transfers the fatty acyl chain to the C-4 alcohol. PigM and pigO are involved in the elimination of the omega-1 alcohol. PigM acts as an O-acetyltransferase that synthesizes the putative O-11 acetyl intermediate whereas pigO eliminates acetic acid to yield an intermediate with a C10(11) double bond. The dehydration of the C-11 alcohol followed by the reduction of the C6(7) double bond by the NAD(P)H-dependent oxidoreductase pigE increases the electrophilicity of the C-5 ketone of the resulting acyl benzopyran. This in turn sets up the C-5 ketone for an intramolecular Knoevenagel aldol condensation with the C-20 enol of the side chain. This condensation affords the characteristic linear tricyclic carbon skeletons of the yellow pigments that serve as the common precursors for the classical yellow pigments monascin and ankaflavin, orange pigments rubopunctatin and monascorubrin, and red pigments ribropunctamine and monascorubramine. The FAD-dependent oxidoreductase pigF is especially invoved in the biosynthesis of orange and red pigments via desaturation of C6(7). The polypeptide is O-acyltransferase pigD (Monascus ruber (Mold)).